We begin with the raw amino-acid sequence, 423 residues long: Phosphoribosylamine--glycine ligase (423 aa).

The ATP-grasp domain maps to 107–312 (KDLCARYDIP…LLPILYATAT (206 aa)). 133–193 (VRAQGAPIVI…EAFLDGEEAS (61 aa)) contacts ATP. 2 residues coordinate Mg(2+): E282 and N284.

The protein belongs to the GARS family. Mg(2+) serves as cofactor. Requires Mn(2+) as cofactor.

It catalyses the reaction 5-phospho-beta-D-ribosylamine + glycine + ATP = N(1)-(5-phospho-beta-D-ribosyl)glycinamide + ADP + phosphate + H(+). It functions in the pathway purine metabolism; IMP biosynthesis via de novo pathway; N(1)-(5-phospho-D-ribosyl)glycinamide from 5-phospho-alpha-D-ribose 1-diphosphate: step 2/2. This chain is Phosphoribosylamine--glycine ligase, found in Agrobacterium fabrum (strain C58 / ATCC 33970) (Agrobacterium tumefaciens (strain C58)).